We begin with the raw amino-acid sequence, 244 residues long: NAD(P)H-quinone oxidoreductase subunit K (244 aa).

[4Fe-4S] cluster contacts are provided by Cys60, Cys61, Cys125, and Cys156. The disordered stretch occupies residues 213-244; sequence TSANSIPSSKKEKITELPDNNEKAEIIDTLEN. Over residues 221-238 the composition is skewed to basic and acidic residues; that stretch reads SKKEKITELPDNNEKAEI.

The protein belongs to the complex I 20 kDa subunit family. In terms of assembly, NDH-1 can be composed of about 15 different subunits; different subcomplexes with different compositions have been identified which probably have different functions. [4Fe-4S] cluster is required as a cofactor.

The protein localises to the cellular thylakoid membrane. The enzyme catalyses a plastoquinone + NADH + (n+1) H(+)(in) = a plastoquinol + NAD(+) + n H(+)(out). The catalysed reaction is a plastoquinone + NADPH + (n+1) H(+)(in) = a plastoquinol + NADP(+) + n H(+)(out). NDH-1 shuttles electrons from an unknown electron donor, via FMN and iron-sulfur (Fe-S) centers, to quinones in the respiratory and/or the photosynthetic chain. The immediate electron acceptor for the enzyme in this species is believed to be plastoquinone. Couples the redox reaction to proton translocation, and thus conserves the redox energy in a proton gradient. Cyanobacterial NDH-1 also plays a role in inorganic carbon-concentration. This chain is NAD(P)H-quinone oxidoreductase subunit K, found in Prochlorococcus marinus (strain MIT 9301).